The chain runs to 287 residues: MAEHFKQIIRCPVCLKDLEEAVQLKCGYACCLQCLNSLQKEPDGEGLLCRFCSVVSQKDDIKPKYKLRALVSIIKELEPKLKSVLTMNPRMRKFQVDMTFDVDTANNYLIISEDLRSFRSGDLSQNRKEQAERFDTALCVLGTPRFTSGRHYWEVDVGTSQVWDVGVCKESVNRQGKIVLSSEHGFLTVGCREGKVFAASTVPMTPLWVSPQLHRVGIFLDVGMRSIAFYNVSDGCHIYTFIEIPVCEPWRPFFAHKRGSQDDQSILSICSVINPSAASAPVSSEGK.

The RING-type; degenerate zinc finger occupies 11-53 (CPVCLKDLEEAVQLKCGYACCLQCLNSLQKEPDGEGLLCRFCS). In terms of domain architecture, B30.2/SPRY spans 78–276 (EPKLKSVLTM…LSICSVINPS (199 aa)).

Interacts with PSMB1, UBE2A and CCNB1.

It is found in the cytoplasm. The protein resides in the nucleus. This chain is Ret finger protein-like 4A (RFPL4A), found in Homo sapiens (Human).